The chain runs to 408 residues: MATKLIKHGSKAREQMLEGIDILADAVKVTLGPKGRNVLIEQSFGSPKITKDGVTVAKSIELKDKIRNAGAQLLKSAATKAAEVAGDGTTTATVLARALAREGNKLVAAGYNPMDLKRGMDLAVNAVVEEIKKSSKKINSQEEIAQVGTISSNGDKEIGEKIAKAMEEVGKEGVITVEEAKNFSFDVEVVKGMMFDRGYLSPYFVTNSEKMVAELENPFILLFEKKLSNLQPMLPILEAVVQSQRPLLIIAEDVEGEALATLVVNRLRGGLKVAAVKAPGFGDRRKAMMEDIAILTKGELITEDLGMKLENVSIKSLGTAKRVTISKENTVIVDGNGDKKNIEDRVLQIKSQIAETTSDYDKEKLQERLAKLSGGVAVLKVGGATEVEVKERKDRVEDALAATRAAVE.

ATP contacts are provided by residues T30 to P33, K51, and D87 to T91.

The protein belongs to the chaperonin (HSP60) family. Forms a cylinder of 14 subunits composed of two heptameric rings stacked back-to-back. Interacts with the co-chaperonin GroES.

It is found in the cytoplasm. It carries out the reaction ATP + H2O + a folded polypeptide = ADP + phosphate + an unfolded polypeptide.. Functionally, together with its co-chaperonin GroES, plays an essential role in assisting protein folding. The GroEL-GroES system forms a nano-cage that allows encapsulation of the non-native substrate proteins and provides a physical environment optimized to promote and accelerate protein folding. The sequence is that of Chaperonin GroEL from Rickettsia rickettsii.